The sequence spans 252 residues: uncharacterized protein (252 aa).

Positions 1–22 (MIHSKRLRLWLYLVLLAVFISA) are cleaved as a signal peptide. Cys-23 is lipidated: N-palmitoyl cysteine. The S-diacylglycerol cysteine moiety is linked to residue Cys-23.

It belongs to the staphylococcal tandem lipoprotein family.

It is found in the cell membrane. This is an uncharacterized protein from Staphylococcus aureus (strain MW2).